The chain runs to 355 residues: MKLDDLLGEYYELEQQLADPAVHADQAQARTLAKRYSQLTPIVATYRELNRVESDIETAQELAAEDPSFADEAKQLAAQREELVQRLRTLLIPRDPNDDKDVILEVKAGEGGEESALFASDLVRMYLRYAERQGWKTEIISATHSDLGGYKDITIAIKNRGTVEPGQGVWHRLKFEGGVHRVQRVPVTESQGRIHTSAVGVLVLPEAEEIEVEINESDLRIDVYRSSGPGGQSVNTTDSAVRITHLPTGIVVSCQNEKSQLQNKEQALRVLRARLLAEAQAAAEAEAAAERRSQVRTVDRSERVRTYNFPENRISDHRVGYKAYNLDQVLDGELDGVIQALVDADTKERLEAAQQ.

N5-methylglutamine is present on Gln-232.

This sequence belongs to the prokaryotic/mitochondrial release factor family. Methylated by PrmC. Methylation increases the termination efficiency of RF1.

The protein localises to the cytoplasm. In terms of biological role, peptide chain release factor 1 directs the termination of translation in response to the peptide chain termination codons UAG and UAA. This is Peptide chain release factor 1 from Thermobifida fusca (strain YX).